The chain runs to 172 residues: MEYFNVGKIVNTQGLQGEMRVLSVSDFAEERFKKGSQLALFDDKDQFVQEVTIVSHRKQKHFDIIKLKDMYHINAIEKYKGYTLKVSKANQGDLQEGEFYYHQIIGMAVYEKDRLIGYVKEILQPGANDVWVVKRQGKRDLLLPYIPPVVLNVDVPNKRVDVELMEGLDDED.

The region spanning 96-168 (EGEFYYHQII…RVDVELMEGL (73 aa)) is the PRC barrel domain.

The protein belongs to the RimM family. In terms of assembly, binds ribosomal protein uS19.

The protein resides in the cytoplasm. An accessory protein needed during the final step in the assembly of 30S ribosomal subunit, possibly for assembly of the head region. Essential for efficient processing of 16S rRNA. May be needed both before and after RbfA during the maturation of 16S rRNA. It has affinity for free ribosomal 30S subunits but not for 70S ribosomes. This chain is Ribosome maturation factor RimM, found in Streptococcus pyogenes serotype M28 (strain MGAS6180).